The following is a 975-amino-acid chain: Chromosome transmission fidelity protein 18 homolog (975 aa).

Disordered regions lie at residues 30-83 (EGAS…KRQV) and 114-141 (SEEMEEPPPPDSSPTDITPPPSPEDLAE). Threonine 51 is modified (phosphothreonine). Low complexity predominate over residues 58–77 (RGDAASSPAPAASVGSSQGG). Serine 64 bears the Phosphoserine mark. A compositionally biased stretch (pro residues) spans 122–136 (PPDSSPTDITPPPSP). Phosphoserine is present on serine 225. Disordered regions lie at residues 246-276 (SDTLHSLRSGEEEAAQPLGAPEEEPTDGQDA) and 320-346 (RPSRKPRPSVEPARVSKEATAPGKWKS). Residue 374–381 (GPPGLGKT) participates in ATP binding. Positions 858–896 (ASARVENSPQVDGSPPGLEGLLGGIGEKGVHRPAPRNHE) are disordered. Residue serine 871 is modified to Phosphoserine.

It belongs to the activator 1 small subunits family. CTF18 subfamily. In terms of assembly, component of the CTF18-RFC complex, which consists of CTF18, CTF8, DCC1, RFC2, RFC3, RFC4 and RFC5. During assembly of the CTF18-RFC complex, CTF18 may first assemble into a subcomplex with RFC2, RFC3, RFC4 and RFC5. CTF18 then interacts directly with CTF8, which in turn interacts with DCC1. The CTF18-RFC complex associates with PCNA and with DNA polymerase POLH. The CTF18-RFC complex does not interact with the Rad9/Rad1/Hus1 complex. CTF18 interacts with SMC1A and RAD21. Interacts with DDX11.

Its subcellular location is the nucleus. Its function is as follows. Chromosome cohesion factor involved in sister chromatid cohesion and fidelity of chromosome transmission. Component of one of the cell nuclear antigen loader complexes, CTF18-replication factor C (CTF18-RFC), which consists of CTF18, CTF8, DCC1, RFC2, RFC3, RFC4 and RFC5. The CTF18-RFC complex binds to single-stranded and primed DNAs and has weak ATPase activity that is stimulated by the presence of primed DNA, replication protein A (RPA) and by proliferating cell nuclear antigen (PCNA). The CTF18-RFC complex catalyzes the ATP-dependent loading of PCNA onto primed and gapped DNA. Interacts with and stimulates DNA polymerase POLH. During DNA repair synthesis, involved in loading DNA polymerase POLE at the sites of local damage. This chain is Chromosome transmission fidelity protein 18 homolog (CHTF18), found in Homo sapiens (Human).